The primary structure comprises 394 residues: Phosphopentomutase (394 aa).

Mn(2+)-binding residues include Asp13, Asp286, His291, Asp327, His328, and His339.

This sequence belongs to the phosphopentomutase family. Mn(2+) serves as cofactor.

It is found in the cytoplasm. It catalyses the reaction 2-deoxy-alpha-D-ribose 1-phosphate = 2-deoxy-D-ribose 5-phosphate. The enzyme catalyses alpha-D-ribose 1-phosphate = D-ribose 5-phosphate. The protein operates within carbohydrate degradation; 2-deoxy-D-ribose 1-phosphate degradation; D-glyceraldehyde 3-phosphate and acetaldehyde from 2-deoxy-alpha-D-ribose 1-phosphate: step 1/2. Its function is as follows. Isomerase that catalyzes the conversion of deoxy-ribose 1-phosphate (dRib-1-P) and ribose 1-phosphate (Rib-1-P) to deoxy-ribose 5-phosphate (dRib-5-P) and ribose 5-phosphate (Rib-5-P), respectively. The polypeptide is Phosphopentomutase (Bacillus cereus (strain AH187)).